The chain runs to 365 residues: Putative DNA-directed RNA polymerase subunit alpha-like 3 (365 aa).

The protein belongs to the RNA polymerase alpha chain family. In plastids the minimal PEP RNA polymerase catalytic core is composed of four subunits: alpha, beta, beta', and beta''. When a (nuclear-encoded) sigma factor is associated with the core the holoenzyme is formed, which can initiate transcription.

It localises to the plastid. It is found in the chloroplast. The enzyme catalyses RNA(n) + a ribonucleoside 5'-triphosphate = RNA(n+1) + diphosphate. In terms of biological role, DNA-dependent RNA polymerase catalyzes the transcription of DNA into RNA using the four ribonucleoside triphosphates as substrates. This is Putative DNA-directed RNA polymerase subunit alpha-like 3 (rpoAL3-A) from Pelargonium hortorum (Common geranium).